Consider the following 333-residue polypeptide: Biotin synthase (333 aa).

The Radical SAM core domain maps to 47–276; sequence FFKNQMEFCS…KSEIRLCGGR (230 aa). Positions 65, 69, and 72 each coordinate [4Fe-4S] cluster. The [2Fe-2S] cluster site is built by cysteine 109, cysteine 141, cysteine 201, and arginine 271.

The protein belongs to the radical SAM superfamily. Biotin synthase family. As to quaternary structure, homodimer. The cofactor is [4Fe-4S] cluster. [2Fe-2S] cluster is required as a cofactor.

It catalyses the reaction (4R,5S)-dethiobiotin + (sulfur carrier)-SH + 2 reduced [2Fe-2S]-[ferredoxin] + 2 S-adenosyl-L-methionine = (sulfur carrier)-H + biotin + 2 5'-deoxyadenosine + 2 L-methionine + 2 oxidized [2Fe-2S]-[ferredoxin]. It participates in cofactor biosynthesis; biotin biosynthesis; biotin from 7,8-diaminononanoate: step 2/2. Its function is as follows. Catalyzes the conversion of dethiobiotin (DTB) to biotin by the insertion of a sulfur atom into dethiobiotin via a radical-based mechanism. The sequence is that of Biotin synthase from Sulfurihydrogenibium sp. (strain YO3AOP1).